We begin with the raw amino-acid sequence, 325 residues long: uncharacterized protein (325 aa).

Residues 1–26 (MQGRVAGSCAPLGLLLVCLHLPGLFA) form the signal peptide. The span at 41 to 60 (GTNLPQLGQPSSTGPSNSEH) shows a compositional bias: polar residues. Disordered stretches follow at residues 41-110 (GTNL…MDSW) and 147-189 (GSGP…AGGK). Residues 147–157 (GSGPLPGESSP) are compositionally biased toward low complexity.

As to quaternary structure, binds to numerous extracellular matrix proteins. As to expression, expressed in skin and tonsils.

The protein localises to the secreted. Its subcellular location is the extracellular space. It localises to the extracellular matrix. This is an uncharacterized protein from Homo sapiens (Human).